A 305-amino-acid chain; its full sequence is Glutaminase (305 aa).

7 residues coordinate substrate: serine 61, asparagine 113, glutamate 158, asparagine 165, tyrosine 189, tyrosine 241, and valine 259.

This sequence belongs to the glutaminase family. Homotetramer.

It catalyses the reaction L-glutamine + H2O = L-glutamate + NH4(+). This is Glutaminase from Clostridium botulinum (strain Loch Maree / Type A3).